A 427-amino-acid polypeptide reads, in one-letter code: uncharacterized protein (427 aa).

A coiled-coil region spans residues 135-168; it reads PILKQKLVSLESKVKKIDKEMEKHNDLLKEIQEN.

This is an uncharacterized protein from Arabidopsis thaliana (Mouse-ear cress).